The sequence spans 284 residues: NAD kinase (284 aa).

Asp-70 acts as the Proton acceptor in catalysis. NAD(+)-binding positions include 70 to 71, 139 to 140, Lys-167, Asp-169, Leu-177, 180 to 185, and Gln-236; these read DG, NE, and TAYNLS.

Belongs to the NAD kinase family. The cofactor is a divalent metal cation.

The protein resides in the cytoplasm. The catalysed reaction is NAD(+) + ATP = ADP + NADP(+) + H(+). Functionally, involved in the regulation of the intracellular balance of NAD and NADP, and is a key enzyme in the biosynthesis of NADP. Catalyzes specifically the phosphorylation on 2'-hydroxyl of the adenosine moiety of NAD to yield NADP. This Helicobacter pylori (strain P12) protein is NAD kinase.